Reading from the N-terminus, the 490-residue chain is Cardiolipin synthase A (490 aa).

Transmembrane regions (helical) follow at residues 4 to 24 (YLFT…IIIV) and 39 to 59 (AAWL…WFLL). 2 PLD phosphodiesterase domains span residues 220–247 (MDLR…VDPY) and 403–430 (KKGL…DMRS). Residues His-225, Lys-227, Asp-232, His-408, Lys-410, and Asp-415 contribute to the active site.

It belongs to the phospholipase D family. Cardiolipin synthase subfamily. ClsA sub-subfamily.

The protein resides in the cell membrane. It catalyses the reaction 2 a 1,2-diacyl-sn-glycero-3-phospho-(1'-sn-glycerol) = a cardiolipin + glycerol. Catalyzes the reversible phosphatidyl group transfer from one phosphatidylglycerol molecule to another to form cardiolipin (CL) (diphosphatidylglycerol) and glycerol. This chain is Cardiolipin synthase A, found in Buchnera aphidicola subsp. Baizongia pistaciae (strain Bp).